We begin with the raw amino-acid sequence, 246 residues long: Putative 4'-phosphopantetheinyl transferase slr0495 (246 aa).

Mg(2+) is bound by residues D110 and E156.

This sequence belongs to the P-Pant transferase superfamily. Gsp/Sfp/HetI/AcpT family. Requires Mg(2+) as cofactor.

Probably transfers the 4'-phosphopantetheine moiety from coenzyme A (CoA) to a serine residue of a carrier protein domain. In Synechocystis sp. (strain ATCC 27184 / PCC 6803 / Kazusa), this protein is Putative 4'-phosphopantetheinyl transferase slr0495.